A 269-amino-acid chain; its full sequence is Ribonuclease HII (269 aa).

The region spanning threonine 79 to phenylalanine 269 is the RNase H type-2 domain. A divalent metal cation contacts are provided by aspartate 85, glutamate 86, and aspartate 182.

The protein belongs to the RNase HII family. Mn(2+) is required as a cofactor. Mg(2+) serves as cofactor.

The protein localises to the cytoplasm. The enzyme catalyses Endonucleolytic cleavage to 5'-phosphomonoester.. Endonuclease that specifically degrades the RNA of RNA-DNA hybrids. The chain is Ribonuclease HII from Clostridium novyi (strain NT).